The chain runs to 305 residues: Ornithine carbamoyltransferase (305 aa).

Carbamoyl phosphate is bound by residues 52–55, Gln79, Arg103, and 130–133; these read STRT and HPCQ. Residues Asn161, Asp222, and 226–227 each bind L-ornithine; that span reads SM. Carbamoyl phosphate-binding positions include 262–263 and Arg290; that span reads CL.

Belongs to the aspartate/ornithine carbamoyltransferase superfamily. OTCase family.

The protein resides in the cytoplasm. It catalyses the reaction carbamoyl phosphate + L-ornithine = L-citrulline + phosphate + H(+). It functions in the pathway amino-acid biosynthesis; L-arginine biosynthesis; L-arginine from L-ornithine and carbamoyl phosphate: step 1/3. Its function is as follows. Reversibly catalyzes the transfer of the carbamoyl group from carbamoyl phosphate (CP) to the N(epsilon) atom of ornithine (ORN) to produce L-citrulline. The polypeptide is Ornithine carbamoyltransferase (Pelobacter propionicus (strain DSM 2379 / NBRC 103807 / OttBd1)).